A 349-amino-acid polypeptide reads, in one-letter code: MKTNSEEQMIKLFGIPLSDKPRWQQFLICSSGFFFGYLVNGICEEYVYNRLKFSYGWYFTFAQGLVYIALIYMYGFRTKQMVNPWKTYVKLSGVLMGSHGLTKGSLAYLNYPAQIMFKSTKVLPVMVMGAFIPGLRRKYPVHEYISAMLLVIGLILFTLADAHTSPNFSIIGVMMISGALIMDAFLGNLQEAIFTMNPETTQMEMLFCSTVVGLPFLLAPMILTGELFTAWNSCAQHPYVYGVLVFEAMATFIGQVSVLSLIALFGAATTAMITTARKAVTLLLSYLIFTKPLTEQHGTGLLLIFMGIILKMVPDPNPNPKSSGSGQTPGKLERVKFEKEDDEESRPLV.

Transmembrane regions (helical) follow at residues 23-43 (WQQF…NGIC), 56-76 (GWYF…MYGF), 115-135 (IMFK…IPGL), 140-160 (PVHE…FTLA), 167-187 (NFSI…AFLG), 205-225 (MLFC…ILTG), 248-268 (AMAT…FGAA), and 293-313 (LTEQ…LKMV). The disordered stretch occupies residues 316–349 (PNPNPKSSGSGQTPGKLERVKFEKEDDEESRPLV). The span at 340–349 (EDDEESRPLV) shows a compositional bias: acidic residues.

It belongs to the nucleotide-sugar transporter family. UDP-galactose:UMP antiporter (TC 2.A.7.11) subfamily.

The protein localises to the membrane. Its function is as follows. Sugar transporter involved in the transport of nucleotide-sugars from cytoplasm into the Golgi and/or the endoplasmic reticulum. The chain is UDP-galactose/UDP-glucose transporter 4 from Arabidopsis thaliana (Mouse-ear cress).